The sequence spans 62 residues: Prokaryotic ubiquitin-like protein Pup (62 aa).

The interval 1–29 is disordered; it reads MSQQSLNAPGPGAEDGNDPEAVTGGQTFA. The ARC ATPase binding stretch occupies residues 21-56; sequence AVTGGQTFASAQAADDLLDEIDSVLESNAETFVRSF. At Q62 the chain carries Deamidated glutamine. Q62 is covalently cross-linked (Isoglutamyl lysine isopeptide (Gln-Lys) (interchain with K-? in acceptor proteins)).

It belongs to the prokaryotic ubiquitin-like protein family. As to quaternary structure, strongly interacts with the proteasome-associated ATPase ARC through a hydrophobic interface; the interacting region of Pup lies in its C-terminal half. There is one Pup binding site per ARC hexamer ring. In terms of processing, is modified by deamidation of its C-terminal glutamine to glutamate by the deamidase Dop, a prerequisite to the subsequent pupylation process.

It functions in the pathway protein degradation; proteasomal Pup-dependent pathway. Protein modifier that is covalently attached to lysine residues of substrate proteins, thereby targeting them for proteasomal degradation. The tagging system is termed pupylation. This is Prokaryotic ubiquitin-like protein Pup from Brachybacterium faecium (strain ATCC 43885 / DSM 4810 / JCM 11609 / LMG 19847 / NBRC 14762 / NCIMB 9860 / 6-10).